The primary structure comprises 406 residues: Tryptophan synthase beta chain (406 aa).

Position 99 is an N6-(pyridoxal phosphate)lysine (K99).

It belongs to the TrpB family. In terms of assembly, tetramer of two alpha and two beta chains. Pyridoxal 5'-phosphate serves as cofactor.

It carries out the reaction (1S,2R)-1-C-(indol-3-yl)glycerol 3-phosphate + L-serine = D-glyceraldehyde 3-phosphate + L-tryptophan + H2O. The protein operates within amino-acid biosynthesis; L-tryptophan biosynthesis; L-tryptophan from chorismate: step 5/5. Its function is as follows. The beta subunit is responsible for the synthesis of L-tryptophan from indole and L-serine. This is Tryptophan synthase beta chain from Rhizobium johnstonii (strain DSM 114642 / LMG 32736 / 3841) (Rhizobium leguminosarum bv. viciae).